A 690-amino-acid chain; its full sequence is MDFHNILVMASEQQGLNAVPKRYSLAVGPPKKVPKVKGVESAAVQAFLRRKEEEKRKKELEEKRKKERLLAKRIELKHDRKARAMASRTKDNFYGYNGIPVEEKPKKRRRTCENVSQAPEAEYATENEAEQLEFAQTESEYEQEEYDEKPSKAAVKPKAPPKSAPAPLNFADLLRLAEKKQYEPVEIKVVKKIEERPRTAEELREREYLERKNKRVETQKKKSEKEVKSAGISSSSKKATSLKECADAKLSRSAADKHAPPKSSLSSLSGTDKKPKAPALTEKHSRSFSSSKLSQMEKGKTSQNSSLKSPAAGSHSKLPANGMGKTGSSFPVPSSKPMANGAQRLPSAKESSLKKPVHTKPGNAAALQHETNSSAKRPSSSLGKGGSGHPAGGSSAGPGRSSSNSGTGPGRPGSVSSPGPGRQGSSSAAGPGRPSSSSSLGPGRLGSGSGVGPGRPGGSSSTGLGRPGGSSGTGPGRPGNSTNTAPGRLGSGMGTGPGRPGVGPSAGPGRPGSSSGTGPGRPGVSPSAGPGRPGLTAVKPRCTVVSETISSKNLVTRPSNGQINGMRSPPGHRPVFRPQGIGRPPVGYKRQIDDDDDDDEYDSEMDDFIEDEGEPQEEISKHIREIFGYDRKRYKDESDYALRYMESSWREQQKEEARSLRLGVQEDLEELRREEEELKRKRQSKKLRTR.

The important for interaction with DNA stretch occupies residues M1–Q579. A coiled-coil region spans residues E40 to A82. 2 disordered regions span residues P105–P167 and E186–I619. The span at E186–K228 shows a compositional bias: basic and acidic residues. The span at S229–K243 shows a compositional bias: low complexity. Basic and acidic residues-rich tracts occupy residues E244 to A259 and T271 to S285. Positions H369 to S380 are enriched in polar residues. Over residues G383–A396 the composition is skewed to gly residues. The segment covering G397–P442 has biased composition (low complexity). 3 stretches are compositionally biased toward gly residues: residues G443–G457, G465–R477, and L489–R521. The span at V545–G565 shows a compositional bias: polar residues. The tract at residues G580–R690 is important for interaction with histones. Positions D593–E617 are enriched in acidic residues. The stretch at R650–R690 forms a coiled coil.

This sequence belongs to the SPT2 family. As to quaternary structure, interacts with POLR1A. Interacts with histones. Interacts with a heterotetrameric complex formed by histone H3 and H4, especially when the histone tetramer is not bound to DNA.

It localises to the nucleus. It is found in the nucleolus. Histone chaperone that stabilizes pre-existing histone tetramers and regulates replication-independent histone exchange on chromatin. Required for normal chromatin refolding in the coding region of transcribed genes, and for the suppression of spurious transcription. Binds DNA and histones and promotes nucleosome assembly (in vitro). Modulates RNA polymerase 1-mediated transcription. Required for optimal growth in the presence of the DNA damaging agents actinomycin D or mitomycin C (in vitro). Facilitates formation of tetrameric histone complexes containing histone H3 and H4. Modulates RNA polymerase 1-mediated transcription. Binds DNA, with a preference for branched DNA species, such as Y-form DNA and Holliday junction DNA. The polypeptide is Protein SPT2 homolog (SPTY2D1) (Gallus gallus (Chicken)).